Here is a 242-residue protein sequence, read N- to C-terminus: Ubiquinone biosynthesis O-methyltransferase (242 aa).

Residues arginine 44, glycine 64, aspartate 85, and methionine 129 each contribute to the S-adenosyl-L-methionine site.

It belongs to the methyltransferase superfamily. UbiG/COQ3 family.

The catalysed reaction is a 3-demethylubiquinol + S-adenosyl-L-methionine = a ubiquinol + S-adenosyl-L-homocysteine + H(+). It carries out the reaction a 3-(all-trans-polyprenyl)benzene-1,2-diol + S-adenosyl-L-methionine = a 2-methoxy-6-(all-trans-polyprenyl)phenol + S-adenosyl-L-homocysteine + H(+). Its pathway is cofactor biosynthesis; ubiquinone biosynthesis. O-methyltransferase that catalyzes the 2 O-methylation steps in the ubiquinone biosynthetic pathway. The sequence is that of Ubiquinone biosynthesis O-methyltransferase from Salmonella choleraesuis (strain SC-B67).